The chain runs to 159 residues: Sulfur carrier protein DsrE2 (159 aa).

2 helical membrane-spanning segments follow: residues 21 to 43 (PFILASTAAALGYEVQVFFTFYG) and 72 to 91 (WFPVLGLALPGMQGMMTAMM).

The protein localises to the cell membrane. Its pathway is energy metabolism; sulfur metabolism. Sulfur carrier protein probably involved in sulfur trafficking for oxidative dissimilatory sulfur metabolism. May be a component of a cytoplasmic sulfur relay system delivering sulfur to DsrC. Binds sulfur in the presence of sulfide in vitro. This is Sulfur carrier protein DsrE2 from Allochromatium vinosum (strain ATCC 17899 / DSM 180 / NBRC 103801 / NCIMB 10441 / D) (Chromatium vinosum).